Here is a 261-residue protein sequence, read N- to C-terminus: tRNA pseudouridine synthase A (261 aa).

The active-site Nucleophile is the D55. Residue Y114 participates in substrate binding.

This sequence belongs to the tRNA pseudouridine synthase TruA family. Homodimer.

The enzyme catalyses uridine(38/39/40) in tRNA = pseudouridine(38/39/40) in tRNA. Formation of pseudouridine at positions 38, 39 and 40 in the anticodon stem and loop of transfer RNAs. The chain is tRNA pseudouridine synthase A from Paracoccus denitrificans (strain Pd 1222).